A 104-amino-acid chain; its full sequence is Cell division protein FtsB (104 aa).

Topologically, residues 1–3 (MGK) are cytoplasmic. A helical transmembrane segment spans residues 4–21 (LTLLLLVLLGWLQYSLWL). The Periplasmic segment spans residues 22-104 (GKNGIHDYTR…NAQQGRPASQ (83 aa)). A coiled-coil region spans residues 33 to 62 (DEDVASQQGNNAKLKARNDRLFAEIDDLNG).

The protein belongs to the FtsB family. As to quaternary structure, part of a complex composed of FtsB, FtsL and FtsQ.

Its subcellular location is the cell inner membrane. In terms of biological role, essential cell division protein. May link together the upstream cell division proteins, which are predominantly cytoplasmic, with the downstream cell division proteins, which are predominantly periplasmic. The polypeptide is Cell division protein FtsB (Erwinia tasmaniensis (strain DSM 17950 / CFBP 7177 / CIP 109463 / NCPPB 4357 / Et1/99)).